Consider the following 212-residue polypeptide: Sentrin-specific protease 8 (212 aa).

Position 1 is an N-acetylmethionine (M1). The segment at 11-174 (SLLRQSDVSL…MYVICNTEAL (164 aa)) is protease. Residues H102 and D119 contribute to the active site. The active-site Nucleophile is the C163.

Belongs to the peptidase C48 family. As to expression, broadly expressed, with highest levels in kidney and pancreas.

Its function is as follows. Protease that catalyzes two essential functions in the NEDD8 pathway: processing of full-length NEDD8 to its mature form and deconjugation of NEDD8 from targeted proteins such as cullins or p53. In Homo sapiens (Human), this protein is Sentrin-specific protease 8 (SENP8).